A 1277-amino-acid chain; its full sequence is DNA repair protein RAD5B (1277 aa).

Residues 271 to 293 are disordered; that stretch reads KLEQENDDLFSSGDSDGTSAKRR. Positions 674-871 constitute a Helicase ATP-binding domain; that stretch reads PTATQMARGG…YSLLCFLHVE (198 aa). 687 to 694 contributes to the ATP binding site; it reads DAMGLGKT. A DEAH box motif is present at residues 822-825; sequence DEAH. The RING-type zinc-finger motif lies at 1040 to 1080; it reads CPICLESADDPVLTPCAHRMCRECLLTSWRSPSCGLCPICR. The Helicase C-terminal domain maps to 1113-1277; sequence ELLKCLEKIK…RLEELKMLFR (165 aa).

Belongs to the SNF2/RAD54 helicase family. RAD16 subfamily.

The protein localises to the nucleus. In terms of biological role, possesses intrinsic ATP-dependent nucleosome-remodeling activity. This activity may be required for DNA repair. Does not seem to be required for DNA repair and regulation of homologous recombination (HR). The protein is DNA repair protein RAD5B of Arabidopsis thaliana (Mouse-ear cress).